Consider the following 360-residue polypeptide: Phenylalanine--tRNA ligase alpha subunit (360 aa).

Glu260 serves as a coordination point for Mg(2+).

It belongs to the class-II aminoacyl-tRNA synthetase family. Phe-tRNA synthetase alpha subunit type 1 subfamily. As to quaternary structure, tetramer of two alpha and two beta subunits. The cofactor is Mg(2+).

It localises to the cytoplasm. The catalysed reaction is tRNA(Phe) + L-phenylalanine + ATP = L-phenylalanyl-tRNA(Phe) + AMP + diphosphate + H(+). In Beijerinckia indica subsp. indica (strain ATCC 9039 / DSM 1715 / NCIMB 8712), this protein is Phenylalanine--tRNA ligase alpha subunit.